The chain runs to 1029 residues: MADKTPGGSQKASSKTRSSDVHSSGSSDAHMDASGPSDSDMPSRTRPKSPRKHNYRNESARESLCDSPHQNLSRPLLENKLKAFSIGKMSTAKRTLSKKEQEELKKKEDEKAAAEIYEEFLAAFEGSDGNKVKTFVRGGVVNAAKEEHETDEKRGKIYKPSSRFADQKNPPNQSSNERPPSLLVIETKKPPLKKGEKEKKKSNLELFKEELKQIQEERDERHKTKGRLSRFEPPQSDSDGQRRSMDAPSRRNRSSGVLDDYAPGSHDVGDPSTTNLYLGNINPQMNEEMLCQEFGRFGPLASVKIMWPRTDEERARERNCGFVAFMNRRDAERALKNLNGKMIMSFEMKLGWGKAVPIPPHPIYIPPSMMEHTLPPPPSGLPFNAQPRERLKNPNAPMLPPPKNKEDFEKTLSQAIVKVVIPTERNLLALIHRMIEFVVREGPMFEAMIMNREINNPMFRFLFENQTPAHVYYRWKLYSILQGDSPTKWRTEDFRMFKNGSFWRPPPLNPYLHGMSEEQETEAFVEEPSKKGALKEEQRDKLEEILRGLTPRKNDIGDAMVFCLNNAEAAEEIVDCITESLSILKTPLPKKIARLYLVSDVLYNSSAKVANASYYRKFFETKLCQIFSDLNATYRTIQGHLQSENFKQRVMTCFRAWEDWAIYPEPFLIKLQNIFLGLVNIIEEKETEDVPDDLDGAPIEEELDGAPLEDVDGIPIDATPIDDLDGVPIKSLDDDLDGVPLDATEDSKKNEPIFKVAPSKWEAVDESELEAQAVTTSKWELFDQHEESEEEENQNQEEESEDEEDTQSSKSEEHHLYSNPIKEEMTESKFSKYSEMSEEKRAKLREIELKVMKFQDELESGKRPKKPGQSFQEQVEHYRDKLLQREKEKELERERERDKKDKEKLESRSKDKKEKDECTPTRKERKRRHSTSPSPSRSSSGRRVKSPSPKSERSERSERSHKESSRSRSSHKDSPRDVSKKAKRSPSGSRTPKRSRRSRSRSPKKSGKKSRSQSRSPHRSHKKSKKNKH.

Disordered regions lie at residues 1–111 (MADK…EDEK) and 141–274 (VNAA…PSTT). An N-acetylalanine modification is found at A2. Residues 7 to 16 (GGSQKASSKT) are compositionally biased toward polar residues. The span at 45-54 (TRPKSPRKHN) shows a compositional bias: basic residues. A compositionally biased stretch (basic and acidic residues) spans 55-64 (YRNESARESL). S67 is subject to Phosphoserine. K80 is covalently cross-linked (Glycyl lysine isopeptide (Lys-Gly) (interchain with G-Cter in SUMO2)). The stretch at 92 to 121 (AKRTLSKKEQEELKKKEDEKAAAEIYEEFL) forms a coiled coil. 2 stretches are compositionally biased toward basic and acidic residues: residues 97–111 (SKKE…EDEK) and 144–155 (AKEEHETDEKRG). Glycyl lysine isopeptide (Lys-Gly) (interchain with G-Cter in SUMO2) cross-links involve residues K145 and K168. Residues 169-178 (NPPNQSSNER) show a composition bias toward polar residues. A compositionally biased stretch (basic and acidic residues) spans 186 to 222 (ETKKPPLKKGEKEKKKSNLELFKEELKQIQEERDERH). Residues 192 to 232 (LKKGEKEKKKSNLELFKEELKQIQEERDERHKTKGRLSRFE) adopt a coiled-coil conformation. A Phosphoserine modification is found at S202. K208 is covalently cross-linked (Glycyl lysine isopeptide (Lys-Gly) (interchain with G-Cter in SUMO2)). The residue at position 236 (S236) is a Phosphoserine. The segment covering 239–249 (DGQRRSMDAPS) has biased composition (basic and acidic residues). The 82-residue stretch at 274–355 (TNLYLGNINP…FEMKLGWGKA (82 aa)) folds into the RRM domain. The stretch at 430 to 473 (LIHRMIEFVVREGPMFEAMIMNREINNPMFRFLFENQTPAHVYY) is one SURP motif repeat. S485 is modified (phosphoserine). The CID domain occupies 534–679 (LKEEQRDKLE…KLQNIFLGLV (146 aa)). The residue at position 719 (T719) is a Phosphothreonine. Glycyl lysine isopeptide (Lys-Gly) (interchain with G-Cter in SUMO2) cross-links involve residues K748 and K749. K760 is modified (N6-acetyllysine; alternate). K760 is covalently cross-linked (Glycyl lysine isopeptide (Lys-Gly) (interchain with G-Cter in SUMO2); alternate). 2 disordered regions span residues 778–841 (KWEL…EEKR) and 855–1029 (QDEL…KNKH). Positions 786–806 (EESEEEENQNQEEESEDEEDT) are enriched in acidic residues. Residues S788, S800, and S811 each carry the phosphoserine modification. Composition is skewed to basic and acidic residues over residues 810-841 (KSEE…EEKR) and 874-922 (QVEH…TPTR). Glycyl lysine isopeptide (Lys-Gly) (interchain with G-Cter in SUMO2) cross-links involve residues K822, K829, and K832. Residues 837–915 (SEEKRAKLRE…ESRSKDKKEK (79 aa)) are a coiled coil. The residue at position 931 (T931) is a Phosphothreonine. S946 and S948 each carry phosphoserine. Over residues 950–980 (KSERSERSERSHKESSRSRSSHKDSPRDVSK) the composition is skewed to basic and acidic residues. Over residues 991 to 1029 (TPKRSRRSRSRSPKKSGKKSRSQSRSPHRSHKKSKKNKH) the composition is skewed to basic residues.

This sequence belongs to the splicing factor SR family. As to quaternary structure, interacts with ERBB4.

The protein resides in the nucleus. The polypeptide is U2 snRNP-associated SURP motif-containing protein (U2SURP) (Homo sapiens (Human)).